Here is a 228-residue protein sequence, read N- to C-terminus: Protein ARV 2 (228 aa).

The next 2 membrane-spanning stretches (helical) occupy residues 37-57 and 80-100; these read EVAD…LILH and LLWK…LLLR. N-linked (GlcNAc...) asparagine glycosylation occurs at N107. A run of 3 helical transmembrane segments spans residues 123–143, 150–170, and 176–196; these read VLSA…LMLV, ILLT…MPVW, and VIFI…KVMT.

This sequence belongs to the ARV1 family. Restricted to tissues in which cells are actively dividing or expanding. Mostly expressed in roots and flowers, and, to a lower extent, in stems and leaves.

It localises to the endoplasmic reticulum membrane. Mediator of sterol homeostasis involved in sterol uptake, trafficking and distribution into membranes. Also regulates the sphingolipid metabolism. The sequence is that of Protein ARV 2 from Arabidopsis thaliana (Mouse-ear cress).